Consider the following 142-residue polypeptide: Hemoglobin subunit alpha-4 (142 aa).

The Globin domain maps to 2–142 (TLTDSDKAAI…VATVLTSKYR (141 aa)). Histidine 59 provides a ligand contact to O2. Histidine 88 contributes to the heme b binding site.

It belongs to the globin family. Heterotetramer of two alpha chains and two beta chains. Red blood cells.

In terms of biological role, this is a larval (tadpole) alpha-globin. The chain is Hemoglobin subunit alpha-4 (hba4) from Xenopus laevis (African clawed frog).